The sequence spans 429 residues: Ribosomal RNA small subunit methyltransferase B (429 aa).

Residues 254-260 (CAAPGGK), Asp-277, Asp-303, and Asp-322 each bind S-adenosyl-L-methionine. Cys-375 acts as the Nucleophile in catalysis.

This sequence belongs to the class I-like SAM-binding methyltransferase superfamily. RsmB/NOP family.

Its subcellular location is the cytoplasm. It catalyses the reaction cytidine(967) in 16S rRNA + S-adenosyl-L-methionine = 5-methylcytidine(967) in 16S rRNA + S-adenosyl-L-homocysteine + H(+). Functionally, specifically methylates the cytosine at position 967 (m5C967) of 16S rRNA. This chain is Ribosomal RNA small subunit methyltransferase B, found in Escherichia coli O17:K52:H18 (strain UMN026 / ExPEC).